The chain runs to 209 residues: Protein-L-isoaspartate O-methyltransferase (209 aa).

Residue S59 is part of the active site.

It belongs to the methyltransferase superfamily. L-isoaspartyl/D-aspartyl protein methyltransferase family. In terms of assembly, monomer.

It localises to the cytoplasm. The catalysed reaction is [protein]-L-isoaspartate + S-adenosyl-L-methionine = [protein]-L-isoaspartate alpha-methyl ester + S-adenosyl-L-homocysteine. In terms of biological role, catalyzes the methyl esterification of L-isoaspartyl residues in peptides and proteins that result from spontaneous decomposition of normal L-aspartyl and L-asparaginyl residues. It plays a role in the repair and/or degradation of damaged proteins. This is Protein-L-isoaspartate O-methyltransferase (pcm) from Helicobacter pylori (strain J99 / ATCC 700824) (Campylobacter pylori J99).